Here is a 652-residue protein sequence, read N- to C-terminus: Regulator of DNA class I crossover intermediates 1 (652 aa).

The segment at residues 1–228 (MNWVGGSRSR…APYKRTNSSE (228 aa)) is a DNA-binding region (binds DNA containing a D-loop). 2 disordered regions span residues 464-512 (YLES…KATE) and 621-652 (EKESSHPEAGSCTEDRTADTTGGQETPTSNSL). A compositionally biased stretch (low complexity) spans 467 to 477 (SSQSSQSASYS). Polar residues-rich tracts occupy residues 478–491 (PRPTESTFSSSTDL) and 639–652 (DTTGGQETPTSNSL).

Interacts with MSH5. Interacts with TEX11. In terms of tissue distribution, expressed mainly in testis (at protein level). Expressed in spermatogonia and enriched in spermatocytes; absent in testicular somatic cells (at protein level). No expression or low levels in other tissues.

It localises to the chromosome. Functionally, involved in recombination, probably acting by stabilizing recombination intermediates during meiotic crossover formation. Required for normal germline development and fertility. Required for meiotic progression, complete chromosomal synapsis and crossover formation. Binds double-stranded DNA. However, also binds branched DNA molecules, such as those containing a D-loop or Holliday junction structure. Probably not required for formation of DNA double-strand breaks (DSBs). Also binds RNA in an RNA structure-independent manner, with a preference for binding 3'-UTR regions of mRNAs; may stabilize bound RNAs. This is Regulator of DNA class I crossover intermediates 1 from Mus musculus (Mouse).